The chain runs to 211 residues: DNA dC-&gt;dU-editing enzyme APOBEC-3H (211 aa).

The 123-residue stretch at 4–126 folds into the CMP/dCMP-type deaminase domain; sequence LTAKTFSLQF…RRQQEGLRLL (123 aa). Residue H54 coordinates Zn(2+). The Proton donor role is filled by E56. 2 residues coordinate Zn(2+): C85 and C88.

The protein belongs to the cytidine and deoxycytidylate deaminase family. Homodimer. The cofactor is Zn(2+).

It is found in the cytoplasm. The enzyme catalyses a 2'-deoxycytidine in single-stranded DNA + H2O + H(+) = a 2'-deoxyuridine in single-stranded DNA + NH4(+). In terms of biological role, DNA deaminase (cytidine deaminase) which may act as an inhibitor of retrovirus replication and retrotransposon mobility via deaminase-dependent and -independent mechanisms. The polypeptide is DNA dC-&gt;dU-editing enzyme APOBEC-3H (Pongo pygmaeus (Bornean orangutan)).